Consider the following 210-residue polypeptide: Redox-sensing transcriptional repressor Rex (210 aa).

The H-T-H motif DNA-binding region spans 16 to 55 (IYSRFLKRLDKKGITTVSSGDIAEGVGVSPAQVRKDLAYF). 90–95 (GAGNLG) provides a ligand contact to NAD(+).

Belongs to the transcriptional regulatory Rex family. In terms of assembly, homodimer.

The protein resides in the cytoplasm. Its function is as follows. Modulates transcription in response to changes in cellular NADH/NAD(+) redox state. This chain is Redox-sensing transcriptional repressor Rex, found in Desulforamulus reducens (strain ATCC BAA-1160 / DSM 100696 / MI-1) (Desulfotomaculum reducens).